The sequence spans 129 residues: Small ribosomal subunit protein uS11 (129 aa).

Belongs to the universal ribosomal protein uS11 family. In terms of assembly, part of the 30S ribosomal subunit. Interacts with proteins S7 and S18. Binds to IF-3.

Its function is as follows. Located on the platform of the 30S subunit, it bridges several disparate RNA helices of the 16S rRNA. Forms part of the Shine-Dalgarno cleft in the 70S ribosome. The chain is Small ribosomal subunit protein uS11 from Sinorhizobium medicae (strain WSM419) (Ensifer medicae).